Reading from the N-terminus, the 474-residue chain is Putative pectinesterase/pectinesterase inhibitor 38 (474 aa).

Positions 1–130 (MVFGNEMCDE…HSLESITIDV (130 aa)) are pectinesterase inhibitor 38. N-linked (GlcNAc...) asparagine glycosylation is present at asparagine 80. A pectinesterase 38 region spans residues 164-461 (DVVVAQDGSG…TLPKFIDSAS (298 aa)). Substrate contacts are provided by threonine 241 and glutamine 271. Catalysis depends on aspartate 294, which acts as the Proton donor; for pectinesterase activity. A disulfide bridge links cysteine 308 with cysteine 328. Aspartate 315 serves as the catalytic Nucleophile; for pectinesterase activity. Residue asparagine 351 is glycosylated (N-linked (GlcNAc...) asparagine). Substrate contacts are provided by arginine 380 and tryptophan 382. Asparagine 409 carries N-linked (GlcNAc...) asparagine glycosylation.

In the N-terminal section; belongs to the PMEI family. The protein in the C-terminal section; belongs to the pectinesterase family.

The protein resides in the secreted. It localises to the cell wall. The catalysed reaction is [(1-&gt;4)-alpha-D-galacturonosyl methyl ester](n) + n H2O = [(1-&gt;4)-alpha-D-galacturonosyl](n) + n methanol + n H(+). Its pathway is glycan metabolism; pectin degradation; 2-dehydro-3-deoxy-D-gluconate from pectin: step 1/5. Acts in the modification of cell walls via demethylesterification of cell wall pectin. This Arabidopsis thaliana (Mouse-ear cress) protein is Putative pectinesterase/pectinesterase inhibitor 38 (PME38).